The following is a 73-amino-acid chain: MRIAVLLFAIFFFMSQVLPARGKFKEICERPNGSCRDFCLETEIHVGRCLNSQPCCLPLGHQPRIESTTPKKD.

Positions 1-22 (MRIAVLLFAIFFFMSQVLPARG) are cleaved as a signal peptide. 3 disulfides stabilise this stretch: cysteine 28/cysteine 55, cysteine 35/cysteine 49, and cysteine 39/cysteine 56.

This sequence belongs to the beta-defensin family. As to expression, specifically expressed in testis. Low expression is detected also in liver.

It is found in the secreted. Functionally, has antibacterial activity. This chain is Beta-defensin 108B (DEFB108B), found in Homo sapiens (Human).